A 204-amino-acid polypeptide reads, in one-letter code: Thymidylate kinase (204 aa).

ATP is bound at residue Gly-11 to Ser-18.

Belongs to the thymidylate kinase family.

The enzyme catalyses dTMP + ATP = dTDP + ADP. Functionally, phosphorylation of dTMP to form dTDP in both de novo and salvage pathways of dTTP synthesis. This chain is Thymidylate kinase, found in Janthinobacterium sp. (strain Marseille) (Minibacterium massiliensis).